A 375-amino-acid polypeptide reads, in one-letter code: Stomatin-2 (375 aa).

The segment at 1–75 is disordered; that stretch reads MKTQPSEESA…IPVPTGQPRG (75 aa). Low complexity predominate over residues 11-50; it reads SPAPVNPGNSGNSGNRRASSTRISFSDQLDGGDSGDSSSN. Residues 120 to 140 form a helical membrane-spanning segment; sequence GLGFCGWFLMGLSWIMVISTF.

It belongs to the band 7/mec-2 family.

Its subcellular location is the membrane. May be involved in cilia-related function. In Caenorhabditis elegans, this protein is Stomatin-2 (sto-2).